The sequence spans 120 residues: UPF0102 protein Moth_0988 (120 aa).

Belongs to the UPF0102 family.

The sequence is that of UPF0102 protein Moth_0988 from Moorella thermoacetica (strain ATCC 39073 / JCM 9320).